The chain runs to 1491 residues: Neurexin-1a (1491 aa).

A signal peptide spans 1–27 (MSFSMRNGAHLIWIGLLVCCLVDMGAS). The Laminin G-like 1 domain maps to 28–208 (MEFTGAEGQW…SDICEADHIC (181 aa)). Residues 28 to 1415 (MEFTGAEGQW…EVIRESSSTT (1388 aa)) lie on the Extracellular side of the membrane. One can recognise an EGF-like 1 domain in the interval 198-236 (NSDICEADHICLNGGVCSIVNDEPICDCSETGFQGKDCS). Intrachain disulfides connect cysteine 202–cysteine 214, cysteine 208–cysteine 223, and cysteine 225–cysteine 235. 2 consecutive Laminin G-like domains span residues 263 to 460 (MATF…AFKC) and 467 to 661 (DPVT…KPSC). The Ca(2+) site is built by aspartate 309, leucine 326, and methionine 394. Disulfide bonds link cysteine 424/cysteine 460, cysteine 632/cysteine 661, cysteine 669/cysteine 680, cysteine 674/cysteine 689, and cysteine 691/cysteine 701. The 38-residue stretch at 665–702 (PPKQCLSNPCLNSGTCREGWNRYVCDCSGTGYLGRSCE) folds into the EGF-like 2 domain. 2 Laminin G-like domains span residues 707–880 (ILSY…IDYC) and 894–1069 (DPVT…ERGC). Intrachain disulfides connect cysteine 1041/cysteine 1069, cysteine 1076/cysteine 1087, cysteine 1081/cysteine 1096, and cysteine 1098/cysteine 1108. Residues 1072-1109 (PSTTCQEDSCSNQGVCLQQWEGFSCDCSMTSYGGPLCN) form the EGF-like 3 domain. Residues 1113 to 1314 (TTYIFGRDGG…DPNVRVEGSA (202 aa)) form the Laminin G-like 6 domain. Residues 1318-1408 (GDMPSSSITP…AKGYPSPEVI (91 aa)) form a disordered region. Low complexity predominate over residues 1322–1353 (SSSITPQSSVSAAGNRSETSPSITDITTTTAS). Positions 1354-1364 (NRQGKQTTTPQ) are enriched in polar residues. Residues 1416 to 1436 (GMVVGIVAAAALCILILLYAM) form a helical membrane-spanning segment. Residues 1437-1491 (YKYRNRDEGSYHVDESRNYISNSATQPNGAAVKEKPIGVPKNKKDKKNKDKEYYV) lie on the Cytoplasmic side of the membrane. The segment at 1457-1491 (SNSATQPNGAAVKEKPIGVPKNKKDKKNKDKEYYV) is disordered.

The protein belongs to the neurexin family.

The protein resides in the membrane. Functionally, neuronal cell surface protein that may be involved in cell recognition and cell adhesion. This Danio rerio (Zebrafish) protein is Neurexin-1a (nrxn1a).